Reading from the N-terminus, the 78-residue chain is Magnetosome protein MamL (78 aa).

Positions 1–22 (MVRVIGSLVFGGLILLLASSNA) are cleaved as a signal peptide. Topologically, residues 23–38 (HMVETRFGPLIMLAPH) are lumenal. The helical transmembrane segment at 39–59 (FVVLGITFFLGFAIGIVLVFA) threads the bilayer. Residues 60 to 78 (NVMKRRKHKLPGKNIVIKR) lie on the Cytoplasmic side of the membrane.

The protein belongs to the magnetosome MamL family.

The protein localises to the magnetosome membrane. Involved in magnetite crystal maturation, but not in magnetosome vesicle tubulation or formation. One of 7 genes (mamLQBIEMO) able to induce magnetosome membrane biogenesis; coexpression of mamLQRBIEMO in a deletion of the 17 gene mamAB operon restores magnetosome vesicle formation but not magnetite biosynthesis. This Magnetospirillum gryphiswaldense (strain DSM 6361 / JCM 21280 / NBRC 15271 / MSR-1) protein is Magnetosome protein MamL.